A 67-amino-acid polypeptide reads, in one-letter code: Coiled-coil domain-containing protein 179 (67 aa).

2 disordered regions span residues 1-32 and 47-67; these read MCLR…RQSV and RKLG…ILWT. A coiled-coil region spans residues 27–53; that stretch reads STRQSVEKRINYMQNLQKEKRKLGKRF.

This is Coiled-coil domain-containing protein 179 (Ccdc179) from Mus musculus (Mouse).